A 106-amino-acid chain; its full sequence is Immunoglobulin lambda constant 7 (106 aa).

Residues P7–A101 enclose the Ig-like domain. Residues C28 and C87 are joined by a disulfide bond.

As to quaternary structure, immunoglobulins are composed of two identical heavy chains and two identical light chains; disulfide-linked.

It is found in the secreted. The protein resides in the cell membrane. Constant region of immunoglobulin light chains. Immunoglobulins, also known as antibodies, are membrane-bound or secreted glycoproteins produced by B lymphocytes. In the recognition phase of humoral immunity, the membrane-bound immunoglobulins serve as receptors which, upon binding of a specific antigen, trigger the clonal expansion and differentiation of B lymphocytes into immunoglobulins-secreting plasma cells. Secreted immunoglobulins mediate the effector phase of humoral immunity, which results in the elimination of bound antigens. The antigen binding site is formed by the variable domain of one heavy chain, together with that of its associated light chain. Thus, each immunoglobulin has two antigen binding sites with remarkable affinity for a particular antigen. The variable domains are assembled by a process called V-(D)-J rearrangement and can then be subjected to somatic hypermutations which, after exposure to antigen and selection, allow affinity maturation for a particular antigen. In Homo sapiens (Human), this protein is Immunoglobulin lambda constant 7.